Consider the following 323-residue polypeptide: Sphingolipid delta(4)-desaturase DES1 (323 aa).

2 helical membrane-spanning segments follow: residues 41-61 (HNLI…FYLV) and 68-88 (WLLF…TLAI). Residues 89 to 93 (HEISH) carry the Histidine box-1 motif. Residues 104 to 124 (WNRCFGMFANLPLGLPYSVSF) form a helical membrane-spanning segment. Positions 128-132 (HMDHH) match the Histidine box-2 motif. The next 3 membrane-spanning stretches (helical) occupy residues 152-172 (FFCT…FYTI), 185-205 (LEII…YTLG), and 210-230 (FYML…GHFI). The Histidine box-3 motif lies at 259 to 263 (HNEHH).

The protein belongs to the fatty acid desaturase type 1 family. DEGS subfamily. As to quaternary structure, interacts with RLBP1; the interaction increases synthesis of chromophore-precursors by DEGS1.

The protein localises to the endoplasmic reticulum membrane. The catalysed reaction is an N-acylsphinganine + 2 Fe(II)-[cytochrome b5] + O2 + 2 H(+) = an N-acylsphing-4-enine + 2 Fe(III)-[cytochrome b5] + 2 H2O. It carries out the reaction all-trans-retinol = 11-cis-retinol. It catalyses the reaction all-trans-retinol = 9-cis-retinol. The enzyme catalyses all-trans-retinol = 13-cis-retinol. The catalysed reaction is 11-cis-retinol = 13-cis-retinol. It carries out the reaction 11-cis-retinol = 9-cis-retinol. In terms of biological role, has sphingolipid-delta-4-desaturase activity. Converts D-erythro-sphinganine to D-erythro-sphingosine (E-sphing-4-enine). Catalyzes the equilibrium isomerization of retinols. This chain is Sphingolipid delta(4)-desaturase DES1 (degs1), found in Xenopus tropicalis (Western clawed frog).